A 372-amino-acid polypeptide reads, in one-letter code: Probable basic-leucine zipper transcription factor G (372 aa).

Disordered stretches follow at residues Met1–Gln20 and Thr176–Glu234. Composition is skewed to low complexity over residues Gln11–Gln20 and Thr176–Thr215. Residues Ile223–Glu234 are compositionally biased toward polar residues. Positions Glu277–Leu340 constitute a bZIP domain. The tract at residues Lys279 to Arg301 is basic motif. The leucine-zipper stretch occupies residues Leu305–Leu340.

Belongs to the bZIP family.

The protein resides in the nucleus. In terms of biological role, probable transcriptional regulator. The sequence is that of Probable basic-leucine zipper transcription factor G (bzpG) from Dictyostelium discoideum (Social amoeba).